We begin with the raw amino-acid sequence, 292 residues long: Homoserine kinase (292 aa).

Residue 84–94 participates in ATP binding; it reads PLARGMGSSSA.

Belongs to the GHMP kinase family. Homoserine kinase subfamily.

Its subcellular location is the cytoplasm. It carries out the reaction L-homoserine + ATP = O-phospho-L-homoserine + ADP + H(+). It participates in amino-acid biosynthesis; L-threonine biosynthesis; L-threonine from L-aspartate: step 4/5. Catalyzes the ATP-dependent phosphorylation of L-homoserine to L-homoserine phosphate. This Thermus thermophilus (strain ATCC BAA-163 / DSM 7039 / HB27) protein is Homoserine kinase.